The sequence spans 279 residues: Putative E3 ubiquitin-protein ligase C36B7.05c (279 aa).

The FYVE-type zinc finger occupies 27–122 (DDESAQCNNC…VCVNCRQQLS (96 aa)). Zn(2+) is bound by residues Cys33, Cys36, Cys49, Cys52, Cys57, Cys60, Cys114, and Cys117. Residue Ser200 is modified to Phosphoserine. Residues 230–273 (CIICFEEFAAGDRVARIEYCLCIFHLKCYRDWLSTGAAGCPVHA) form an RING-type; atypical zinc finger.

It is found in the cytoplasm. The protein resides in the nucleus. Its subcellular location is the endosome membrane. The protein localises to the vacuole membrane. The catalysed reaction is S-ubiquitinyl-[E2 ubiquitin-conjugating enzyme]-L-cysteine + [acceptor protein]-L-lysine = [E2 ubiquitin-conjugating enzyme]-L-cysteine + N(6)-ubiquitinyl-[acceptor protein]-L-lysine.. It functions in the pathway protein modification; protein ubiquitination. Its function is as follows. Functions as an E3 ubiquitin-protein ligase. Binds phospholipid vesicles containing phosphatidylinositol 3-phosphate. The sequence is that of Putative E3 ubiquitin-protein ligase C36B7.05c from Schizosaccharomyces pombe (strain 972 / ATCC 24843) (Fission yeast).